A 155-amino-acid chain; its full sequence is S-ribosylhomocysteine lyase (155 aa).

Fe cation is bound by residues His58, His62, and Cys125.

Belongs to the LuxS family. Homodimer. Requires Fe cation as cofactor.

It carries out the reaction S-(5-deoxy-D-ribos-5-yl)-L-homocysteine = (S)-4,5-dihydroxypentane-2,3-dione + L-homocysteine. Involved in the synthesis of autoinducer 2 (AI-2) which is secreted by bacteria and is used to communicate both the cell density and the metabolic potential of the environment. The regulation of gene expression in response to changes in cell density is called quorum sensing. Catalyzes the transformation of S-ribosylhomocysteine (RHC) to homocysteine (HC) and 4,5-dihydroxy-2,3-pentadione (DPD). The sequence is that of S-ribosylhomocysteine lyase from Chromohalobacter salexigens (strain ATCC BAA-138 / DSM 3043 / CIP 106854 / NCIMB 13768 / 1H11).